The sequence spans 274 residues: Ciliary microtubule inner protein 2B (274 aa).

Disordered regions lie at residues 46-89 (SPGL…SSMV) and 119-171 (TQRN…MDDR). Basic and acidic residues predominate over residues 130–155 (LPKEAKGEKDVEKDQEPKPEVEKEPE).

It belongs to the CIMIP2 family. In terms of assembly, microtubule inner protein component of sperm flagellar doublet microtubules. Expressed in trachea multiciliated cells.

It is found in the cytoplasm. The protein resides in the cytoskeleton. Its subcellular location is the cilium axoneme. It localises to the flagellum axoneme. Functionally, microtubule inner protein (MIP) part of the dynein-decorated doublet microtubules (DMTs) in cilia axoneme, which is required for motile cilia beating. In Bos taurus (Bovine), this protein is Ciliary microtubule inner protein 2B (CIMIP2B).